The sequence spans 137 residues: Large-conductance mechanosensitive channel (137 aa).

2 consecutive transmembrane segments (helical) span residues 9 to 29 and 79 to 99; these read AFAVKGNVVDMAVGIIIGAAF and IQSVLDFVIVAFAIFMGVKAI.

This sequence belongs to the MscL family. As to quaternary structure, homopentamer.

It is found in the cell inner membrane. Its function is as follows. Channel that opens in response to stretch forces in the membrane lipid bilayer. May participate in the regulation of osmotic pressure changes within the cell. The chain is Large-conductance mechanosensitive channel from Pseudomonas fluorescens (strain Pf0-1).